The chain runs to 59 residues: UPF0391 membrane protein lpg2521 (59 aa).

Transmembrane regions (helical) follow at residues 5–25 (ALIF…GIAV) and 30–50 (IAKI…IMGL).

It belongs to the UPF0391 family.

It localises to the cell membrane. This is UPF0391 membrane protein lpg2521 from Legionella pneumophila subsp. pneumophila (strain Philadelphia 1 / ATCC 33152 / DSM 7513).